Consider the following 319-residue polypeptide: Olfactory receptor 8K1 (319 aa).

Topologically, residues 1-31 (MNHVVKHNHTAVTKVTEFILMGITDNPGLQA) are extracellular. An N-linked (GlcNAc...) asparagine glycan is attached at Asn-8. Residues 32–52 (PLFGLFLIIYLVTVIGNLGMV) traverse the membrane as a helical segment. Residues 53–60 (ILTYLDSK) are Cytoplasmic-facing. A helical transmembrane segment spans residues 61–81 (LHTPMYFFLRHLSITDLGYST). Topologically, residues 82–105 (VIAPKMLVNFIVHKNTISYNWYAT) are extracellular. The helical transmembrane segment at 106–126 (QLAFFEIFIISELFILSAMAY) threads the bilayer. Residues 127–145 (DRYVAICKPLLYVIIMAEK) are Cytoplasmic-facing. A helical transmembrane segment spans residues 146–166 (VLWVLVIVPYLYSTFVSLFLT). At 167–203 (IKLFKLSFCGSNIISYFYCDCIPLMSILCSDTNELEL) the chain is on the extracellular side. Residues 204-223 (IILIFSGCNLLFSLSIVLIS) traverse the membrane as a helical segment. Residues 224–243 (YMFILVAILRMNSRKGRYKA) lie on the Cytoplasmic side of the membrane. Residues 244-264 (FSTCSSHLTVVIMFYGTLLFI) traverse the membrane as a helical segment. The Extracellular segment spans residues 265–277 (YLQPKSSHTLAID). A helical membrane pass occupies residues 278–298 (KMASVFYTLLIPMLNPLIYSL). At 299–319 (RNKEVKDALKRTLTNRFKIPI) the chain is on the cytoplasmic side.

Belongs to the G-protein coupled receptor 1 family.

Its subcellular location is the cell membrane. Its function is as follows. Odorant receptor. This Homo sapiens (Human) protein is Olfactory receptor 8K1 (OR8K1).